The following is a 255-amino-acid chain: Post-GPI attachment to proteins factor 2 (255 aa).

Transmembrane regions (helical) follow at residues 23–43 (LALVALSLPLGGFFFCVIWSL), 111–131 (LGILACFLNVVEDLALFCLSF), 143–163 (NAFVVFIACSECYMLVSYLLN), 185–205 (LFLVNVIAFGLAGYCFVRHNS), and 209–229 (AGVYTFFALFEYIVVLTNMGF).

It belongs to the PGAP2 family.

It is found in the golgi apparatus membrane. It localises to the endoplasmic reticulum membrane. In terms of biological role, involved in the lipid remodeling steps of GPI-anchor maturation. Required for stable expression of GPI-anchored proteins at the cell surface. This is Post-GPI attachment to proteins factor 2 from Drosophila melanogaster (Fruit fly).